The sequence spans 127 residues: Small ribosomal subunit protein uS11 (127 aa).

Belongs to the universal ribosomal protein uS11 family. As to quaternary structure, part of the 30S ribosomal subunit. Interacts with proteins S7 and S18. Binds to IF-3.

In terms of biological role, located on the platform of the 30S subunit, it bridges several disparate RNA helices of the 16S rRNA. Forms part of the Shine-Dalgarno cleft in the 70S ribosome. In Streptococcus gordonii (strain Challis / ATCC 35105 / BCRC 15272 / CH1 / DL1 / V288), this protein is Small ribosomal subunit protein uS11.